The chain runs to 626 residues: Glutamate--cysteine ligase (626 aa).

Belongs to the glutamate--cysteine ligase type 3 family. As to quaternary structure, monomer.

The enzyme catalyses L-cysteine + L-glutamate + ATP = gamma-L-glutamyl-L-cysteine + ADP + phosphate + H(+). It participates in sulfur metabolism; glutathione biosynthesis; glutathione from L-cysteine and L-glutamate: step 1/2. An essential enzyme in glutathione (L-gamma-glutamyl-L-cysteinylglycine, GSH) biosynthesis, GSH is essential for growth and differentiation to prespore stage. Catalyzes the condensation of glutamate to cysteine. The chain is Glutamate--cysteine ligase (gcsA) from Dictyostelium discoideum (Social amoeba).